The sequence spans 151 residues: Cytochrome c oxidase subunit 5B, mitochondrial (151 aa).

Residues 1–17 (MLRTSLTKGARLTGTRF) constitute a mitochondrion transit peptide. The Mitochondrial matrix portion of the chain corresponds to 18–85 (VQTKALSKAT…EWGPRRPVHG (68 aa)). Residues 86-108 (KGDVAFITKGVFLGLGISFGLFG) traverse the membrane as a helical segment. Topologically, residues 109–151 (LVRLLANPETPKTMNREWQLKSDEYLKSKNANPWGGYSQVQSK) are mitochondrial intermembrane.

Belongs to the cytochrome c oxidase IV family. Component of the cytochrome c oxidase (complex IV, CIV), a multisubunit enzyme composed of 12 subunits. The complex is composed of a catalytic core of 3 subunits COX1, COX2 and COX3, encoded in the mitochondrial DNA, and 9 supernumerary subunits COX4, COX5A (or COX5B), COX6, COX7, COX8, COX9, COX12, COX13 and COX26, which are encoded in the nuclear genome. COX5A is the predominant subunit V during aerobic/normoxic growth, it gets replaced by COX5B under anaerobic/hypoxic conditions. The complex exists as a monomer or a dimer and forms supercomplexes (SCs) in the inner mitochondrial membrane with a dimer of ubiquinol-cytochrome c oxidoreductase (cytochrome b-c1 complex, complex III, CIII), resulting in 2 different assemblies (supercomplexes III(2)IV and III(2)IV(2)).

It localises to the mitochondrion inner membrane. The protein operates within energy metabolism; oxidative phosphorylation. Its function is as follows. Component of the cytochrome c oxidase, the last enzyme in the mitochondrial electron transport chain which drives oxidative phosphorylation. The respiratory chain contains 3 multisubunit complexes succinate dehydrogenase (complex II, CII), ubiquinol-cytochrome c oxidoreductase (cytochrome b-c1 complex, complex III, CIII) and cytochrome c oxidase (complex IV, CIV), that cooperate to transfer electrons derived from NADH and succinate to molecular oxygen, creating an electrochemical gradient over the inner membrane that drives transmembrane transport and the ATP synthase. Cytochrome c oxidase is the component of the respiratory chain that catalyzes the reduction of oxygen to water. Electrons originating from reduced cytochrome c in the intermembrane space (IMS) are transferred via the dinuclear copper A center (CU(A)) of COX2 and heme A of COX1 to the active site in COX1, a binuclear center (BNC) formed by heme A3 and copper B (CU(B)). The BNC reduces molecular oxygen to 2 water molecules using 4 electrons from cytochrome c in the IMS and 4 protons from the mitochondrial matrix. The polypeptide is Cytochrome c oxidase subunit 5B, mitochondrial (COX5B) (Saccharomyces cerevisiae (strain ATCC 204508 / S288c) (Baker's yeast)).